The primary structure comprises 314 residues: Homoserine O-acetyltransferase (314 aa).

The Acyl-thioester intermediate role is filled by cysteine 142. The substrate site is built by lysine 163 and serine 192. Histidine 235 (proton acceptor) is an active-site residue. Residue glutamate 237 is part of the active site. Residue arginine 249 participates in substrate binding.

It belongs to the MetA family.

The protein resides in the cytoplasm. It catalyses the reaction L-homoserine + acetyl-CoA = O-acetyl-L-homoserine + CoA. It participates in amino-acid biosynthesis; L-methionine biosynthesis via de novo pathway; O-acetyl-L-homoserine from L-homoserine: step 1/1. Functionally, transfers an acetyl group from acetyl-CoA to L-homoserine, forming acetyl-L-homoserine. This is Homoserine O-acetyltransferase from Streptococcus pneumoniae (strain Taiwan19F-14).